The following is a 126-amino-acid chain: Histone H2B (126 aa).

The span at 1-12 (MPEPAKSAPAAK) shows a compositional bias: low complexity. The interval 1 to 35 (MPEPAKSAPAAKKGSKKAVSKVQKKDGKKRRKSRK) is disordered. N6-acetyllysine is present on residues Lys6 and Lys13. Phosphoserine is present on Ser15. N6-acetyllysine is present on residues Lys16 and Lys21. Ser113 is a glycosylation site (O-linked (GlcNAc) serine). Lys121 participates in a covalent cross-link: Glycyl lysine isopeptide (Lys-Gly) (interchain with G-Cter in ubiquitin).

This sequence belongs to the histone H2B family. The nucleosome is a histone octamer containing two molecules each of H2A, H2B, H3 and H4 assembled in one H3-H4 heterotetramer and two H2A-H2B heterodimers. The octamer wraps approximately 147 bp of DNA. Monoubiquitination of Lys-121 by BRE1 gives a specific tag for epigenetic transcriptional activation and is also prerequisite for histone H3 'Lys-4' and 'Lys-79' methylation. Post-translationally, phosphorylated on Ser-15 during apoptosis; which facilitates apoptotic chromatin condensation. In terms of processing, glcNAcylation at Ser-113 promotes monoubiquitination of Lys-121. It fluctuates in response to extracellular glucose, and associates with transcribed genes. In terms of tissue distribution, expressed by the skin granular glands.

It localises to the nucleus. The protein resides in the secreted. It is found in the chromosome. Core component of nucleosome. Nucleosomes wrap and compact DNA into chromatin, limiting DNA accessibility to the cellular machineries which require DNA as a template. Histones thereby play a central role in transcription regulation, DNA repair, DNA replication and chromosomal stability. DNA accessibility is regulated via a complex set of post-translational modifications of histones, also called histone code, and nucleosome remodeling. Functionally, has antibacterial activity against the Gram-negative bacteria E.coli and the Gram-positive bacteria S.aureus. The chain is Histone H2B from Zhangixalus schlegelii (Japanese gliding frog).